Consider the following 98-residue polypeptide: UPF0473 protein lp_2273 (98 aa).

This sequence belongs to the UPF0473 family.

This chain is UPF0473 protein lp_2273, found in Lactiplantibacillus plantarum (strain ATCC BAA-793 / NCIMB 8826 / WCFS1) (Lactobacillus plantarum).